We begin with the raw amino-acid sequence, 573 residues long: Proline--tRNA ligase (573 aa).

The protein belongs to the class-II aminoacyl-tRNA synthetase family. ProS type 1 subfamily. Homodimer.

The protein resides in the cytoplasm. The catalysed reaction is tRNA(Pro) + L-proline + ATP = L-prolyl-tRNA(Pro) + AMP + diphosphate. Its function is as follows. Catalyzes the attachment of proline to tRNA(Pro) in a two-step reaction: proline is first activated by ATP to form Pro-AMP and then transferred to the acceptor end of tRNA(Pro). As ProRS can inadvertently accommodate and process non-cognate amino acids such as alanine and cysteine, to avoid such errors it has two additional distinct editing activities against alanine. One activity is designated as 'pretransfer' editing and involves the tRNA(Pro)-independent hydrolysis of activated Ala-AMP. The other activity is designated 'posttransfer' editing and involves deacylation of mischarged Ala-tRNA(Pro). The misacylated Cys-tRNA(Pro) is not edited by ProRS. This is Proline--tRNA ligase from Chromohalobacter salexigens (strain ATCC BAA-138 / DSM 3043 / CIP 106854 / NCIMB 13768 / 1H11).